Consider the following 151-residue polypeptide: Large ribosomal subunit protein bL9 (151 aa).

The protein belongs to the bacterial ribosomal protein bL9 family.

Its function is as follows. Binds to the 23S rRNA. This is Large ribosomal subunit protein bL9 from Desulforapulum autotrophicum (strain ATCC 43914 / DSM 3382 / VKM B-1955 / HRM2) (Desulfobacterium autotrophicum).